The primary structure comprises 626 residues: Chaperone protein HtpG (626 aa).

Residues 1-341 (MIKKEFKAES…SEDLSLNISR (341 aa)) are a; substrate-binding. Residues 342 to 552 (EMLQHDRQLK…DGDVTIEMEK (211 aa)) are b. The interval 553–626 (ILSAMPNNQE…FTNDICKLMS (74 aa)) is c.

It belongs to the heat shock protein 90 family. In terms of assembly, homodimer.

It is found in the cytoplasm. In terms of biological role, molecular chaperone. Has ATPase activity. This chain is Chaperone protein HtpG, found in Alkaliphilus metalliredigens (strain QYMF).